The following is a 100-amino-acid chain: Large ribosomal subunit protein uL23 (100 aa).

Belongs to the universal ribosomal protein uL23 family. As to quaternary structure, part of the 50S ribosomal subunit. Contacts protein L29, and trigger factor when it is bound to the ribosome.

Its function is as follows. One of the early assembly proteins it binds 23S rRNA. One of the proteins that surrounds the polypeptide exit tunnel on the outside of the ribosome. Forms the main docking site for trigger factor binding to the ribosome. The polypeptide is Large ribosomal subunit protein uL23 (Shigella dysenteriae serotype 1 (strain Sd197)).